Here is a 553-residue protein sequence, read N- to C-terminus: Arginine--tRNA ligase (553 aa).

The short motif at 130 to 140 (ANPTGDLHIGH) is the 'HIGH' region element.

Belongs to the class-I aminoacyl-tRNA synthetase family. In terms of assembly, monomer.

It is found in the cytoplasm. It carries out the reaction tRNA(Arg) + L-arginine + ATP = L-arginyl-tRNA(Arg) + AMP + diphosphate. The sequence is that of Arginine--tRNA ligase from Staphylococcus aureus (strain USA300 / TCH1516).